A 378-amino-acid polypeptide reads, in one-letter code: IDS-type sesquiterpene synthase (378 aa).

Mg(2+)-binding residues include Asp-120 and Asp-124. The DDXXD motif motif lies at 120–124 (DDYVD).

This sequence belongs to the terpene synthase family. Mg(2+) is required as a cofactor. Highly expressed in male epidermal tissue associated with the cuticle of ventral sternites.

The catalysed reaction is (2Z,6E)-farnesyl diphosphate = (Z)-alpha-bisabolene + diphosphate. It functions in the pathway pheromone biosynthesis. In terms of biological role, sesquiterpene alcohol synthase that catalyzes the formation of the pheromone precursor (Z)-alpha-bisabolene from (2Z,6E)-farnesyl diphosphate. This is IDS-type sesquiterpene synthase from Nezara viridula (Southern green stink bug).